Here is a 206-residue protein sequence, read N- to C-terminus: Ribosomal RNA small subunit methyltransferase G (206 aa).

S-adenosyl-L-methionine is bound by residues Gly-74, Leu-79, 125–126 (VE), and Arg-140.

It belongs to the methyltransferase superfamily. RNA methyltransferase RsmG family.

The protein resides in the cytoplasm. The enzyme catalyses guanosine(527) in 16S rRNA + S-adenosyl-L-methionine = N(7)-methylguanosine(527) in 16S rRNA + S-adenosyl-L-homocysteine. Specifically methylates the N7 position of guanine in position 527 of 16S rRNA. The chain is Ribosomal RNA small subunit methyltransferase G from Shewanella sp. (strain ANA-3).